Consider the following 124-residue polypeptide: Small ribosomal subunit protein uS12 (124 aa).

The residue at position 89 (Asp89) is a 3-methylthioaspartic acid.

It belongs to the universal ribosomal protein uS12 family. Part of the 30S ribosomal subunit. Contacts proteins S8 and S17. May interact with IF1 in the 30S initiation complex.

In terms of biological role, with S4 and S5 plays an important role in translational accuracy. Interacts with and stabilizes bases of the 16S rRNA that are involved in tRNA selection in the A site and with the mRNA backbone. Located at the interface of the 30S and 50S subunits, it traverses the body of the 30S subunit contacting proteins on the other side and probably holding the rRNA structure together. The combined cluster of proteins S8, S12 and S17 appears to hold together the shoulder and platform of the 30S subunit. The polypeptide is Small ribosomal subunit protein uS12 (Hamiltonella defensa subsp. Acyrthosiphon pisum (strain 5AT)).